The following is a 296-amino-acid chain: Phosphoribosylaminoimidazole-succinocarboxamide synthase (296 aa).

This sequence belongs to the SAICAR synthetase family.

It carries out the reaction 5-amino-1-(5-phospho-D-ribosyl)imidazole-4-carboxylate + L-aspartate + ATP = (2S)-2-[5-amino-1-(5-phospho-beta-D-ribosyl)imidazole-4-carboxamido]succinate + ADP + phosphate + 2 H(+). Its pathway is purine metabolism; IMP biosynthesis via de novo pathway; 5-amino-1-(5-phospho-D-ribosyl)imidazole-4-carboxamide from 5-amino-1-(5-phospho-D-ribosyl)imidazole-4-carboxylate: step 1/2. The protein is Phosphoribosylaminoimidazole-succinocarboxamide synthase of Geobacter metallireducens (strain ATCC 53774 / DSM 7210 / GS-15).